A 235-amino-acid polypeptide reads, in one-letter code: Sperm-associated microtubule inner protein 5 (235 aa).

Microtubule inner protein component of sperm flagellar doublet microtubules. As to expression, expressed in sperm.

Its subcellular location is the cytoplasm. It is found in the cytoskeleton. The protein localises to the flagellum axoneme. It localises to the nucleus. Functionally, microtubule inner protein (MIP) part of the dynein-decorated doublet microtubules (DMTs) in flagellum axoneme. May serve to reinforce and thus stabilize the microtubule structure in the sperm flagella. This chain is Sperm-associated microtubule inner protein 5 (SPMIP5), found in Bos taurus (Bovine).